The sequence spans 230 residues: uncharacterized protein (230 aa).

The signal sequence occupies residues 1–22 (MNIRSFLLISIFTAISYLVVDG). At 23-167 (ATPRTFAPSA…YTPYGGVKAL (145 aa)) the chain is on the lumenal side. Positions 55 to 90 (SSSSSSSSISTSHDSQPSTSSSSPSSTSTSSSSGTS) are disordered. The chain crosses the membrane as a helical span at residues 168–188 (IGILVGVVVGSVFLLAIVMVI). Residues 189 to 230 (ARIWGPRLLANKDQNNNNEDLDSNLVSKDSEGTPQITYASNF) lie on the Cytoplasmic side of the membrane. The interval 208 to 230 (DLDSNLVSKDSEGTPQITYASNF) is disordered.

The protein localises to the endoplasmic reticulum membrane. This is an uncharacterized protein from Schizosaccharomyces pombe (strain 972 / ATCC 24843) (Fission yeast).